We begin with the raw amino-acid sequence, 666 residues long: 1,4-alpha-glucan branching enzyme GlgB (666 aa).

Residue aspartate 309 is the Nucleophile of the active site. Glutamate 352 functions as the Proton donor in the catalytic mechanism. A compositionally biased stretch (basic and acidic residues) spans 622–634 (RGERKQNEEEVHR). A disordered region spans residues 622–666 (RGERKQNEEEVHRHVIGRRARKPASLADEKHRETSRAVWGEVPDH).

This sequence belongs to the glycosyl hydrolase 13 family. GlgB subfamily. Monomer.

It catalyses the reaction Transfers a segment of a (1-&gt;4)-alpha-D-glucan chain to a primary hydroxy group in a similar glucan chain.. Its pathway is glycan biosynthesis; glycogen biosynthesis. Functionally, catalyzes the formation of the alpha-1,6-glucosidic linkages in glycogen by scission of a 1,4-alpha-linked oligosaccharide from growing alpha-1,4-glucan chains and the subsequent attachment of the oligosaccharide to the alpha-1,6 position. In Bacillus caldolyticus, this protein is 1,4-alpha-glucan branching enzyme GlgB (glgB).